The primary structure comprises 416 residues: Esterase FrsA (416 aa).

Residues 19–39 (ETSTLVRRTRHDQETQGLHST) are disordered.

The protein belongs to the FrsA family.

The enzyme catalyses a carboxylic ester + H2O = an alcohol + a carboxylate + H(+). Its function is as follows. Catalyzes the hydrolysis of esters. The polypeptide is Esterase FrsA (Pectobacterium atrosepticum (strain SCRI 1043 / ATCC BAA-672) (Erwinia carotovora subsp. atroseptica)).